A 240-amino-acid chain; its full sequence is Tetraspanin-1 (240 aa).

At 1–9 the chain is on the cytoplasmic side; sequence MQCFSFIKT. The chain crosses the membrane as a helical span at residues 10–30; it reads IMILFNLLIFLCGAALLAVGI. The Extracellular segment spans residues 31-52; sequence WVSIDGASFLKIFGPLSSSAMQ. Residues 53–73 form a helical membrane-spanning segment; the sequence is FVNVGYFLIAAGAVVFALGFL. The Cytoplasmic segment spans residues 74 to 88; the sequence is GCYGAQTESKCALMT. A helical transmembrane segment spans residues 89 to 109; that stretch reads FFFILLLIFIAEVAAAVVALV. Residues 110–210 lie on the Extracellular side of the membrane; it reads YTTMAEHFLT…QQLLYDIRTN (101 aa). N-linked (GlcNAc...) asparagine glycosylation occurs at N154. A helical membrane pass occupies residues 211–231; the sequence is AVTVGGVAAGIGGLELAAMIV. The Cytoplasmic segment spans residues 232–240; sequence SMYLYCNLQ.

The protein belongs to the tetraspanin (TM4SF) family. Interacts with SLC19A2. Interacts with NTRK1/TRKA.

Its subcellular location is the lysosome membrane. Functionally, structural component of specialized membrane microdomains known as tetraspanin-enriched microdomains (TERMs), which act as platforms for receptor clustering and signaling. Participates thereby in diverse biological functions such as cell signal transduction, adhesion, migration and protein trafficking. Regulates neuronal differentiation in response to NGF by facilitating NGF-mediated activation of NTRK1/TRKA receptor tyrosine kinase and subsequent downstream signaling pathways. Plays a role in the inhibition of TNFalpha-induced apoptosis. Mechanistically, inhibits the NF-kappa-B signaling pathway by blocking phosphorylation of CHUK. Also promotes the stability of the thiamine transporter 1/SLC19A2 in intestinal epithelial cells leading to an increase of thiamine uptake process. The protein is Tetraspanin-1 (TSPAN1) of Macaca fascicularis (Crab-eating macaque).